A 683-amino-acid polypeptide reads, in one-letter code: Probable metal-nicotianamine transporter YSL3 (683 aa).

14 consecutive transmembrane segments (helical) span residues 29-49, 58-78, 97-117, 142-162, 204-224, 265-285, 309-329, 372-392, 404-424, 448-468, 490-510, 553-573, 595-615, and 628-648; these read LVTP…CFVG, IVPA…KWLI, MFLL…GFAT, HVPI…GVLI, VATI…QWFY, IVNF…YPFL, VFIS…TLIT, IPIP…TIAI, LAVL…ATGL, PGAV…LHIS, TGQI…FLAF, CMTF…VVLV, FFAG…LLAW, and SAVA…SALL.

Belongs to the YSL (TC 2.A.67.2) family.

It is found in the membrane. May be involved in the transport of nicotianamine-chelated metals. The protein is Probable metal-nicotianamine transporter YSL3 (YSL3) of Oryza sativa subsp. japonica (Rice).